Reading from the N-terminus, the 336-residue chain is tRNA(Ile)-lysidine synthase (336 aa).

21–26 (SGGLDS) lines the ATP pocket.

Belongs to the tRNA(Ile)-lysidine synthase family.

It is found in the cytoplasm. The catalysed reaction is cytidine(34) in tRNA(Ile2) + L-lysine + ATP = lysidine(34) in tRNA(Ile2) + AMP + diphosphate + H(+). Its function is as follows. Ligates lysine onto the cytidine present at position 34 of the AUA codon-specific tRNA(Ile) that contains the anticodon CAU, in an ATP-dependent manner. Cytidine is converted to lysidine, thus changing the amino acid specificity of the tRNA from methionine to isoleucine. This Helicobacter pylori (strain ATCC 700392 / 26695) (Campylobacter pylori) protein is tRNA(Ile)-lysidine synthase.